The sequence spans 193 residues: dCTP deaminase (193 aa).

Residues 110–115 (RSSLAR), Asp128, 136–138 (VLE), Tyr171, Lys178, and Gln182 contribute to the dCTP site. The Proton donor/acceptor role is filled by Glu138. Positions 169–193 (RPYNRRQDAKYRDQQGAVASRIDKD) are disordered.

This sequence belongs to the dCTP deaminase family. Homotrimer.

The catalysed reaction is dCTP + H2O + H(+) = dUTP + NH4(+). Its pathway is pyrimidine metabolism; dUMP biosynthesis; dUMP from dCTP (dUTP route): step 1/2. Catalyzes the deamination of dCTP to dUTP. This is dCTP deaminase from Salmonella paratyphi B (strain ATCC BAA-1250 / SPB7).